Here is a 325-residue protein sequence, read N- to C-terminus: L-lactate dehydrogenase 1 (325 aa).

Residues V17, D38, K43, Y68, and 82–83 (GA) contribute to the NAD(+) site. Residues Q85, R91, and 123–126 (NPVD) each bind substrate. NAD(+) is bound by residues 121–123 (AAN) and S146. Substrate is bound at residue 151 to 154 (DTAR). R156 and H171 together coordinate beta-D-fructose 1,6-bisphosphate. The active-site Proton acceptor is H178. Phosphotyrosine is present on Y223. Position 232 (T232) interacts with substrate.

This sequence belongs to the LDH/MDH superfamily. LDH family. As to quaternary structure, homotetramer.

The protein resides in the cytoplasm. The enzyme catalyses (S)-lactate + NAD(+) = pyruvate + NADH + H(+). The protein operates within fermentation; pyruvate fermentation to lactate; (S)-lactate from pyruvate: step 1/1. With respect to regulation, allosterically activated by fructose 1,6-bisphosphate (FBP). Catalyzes the conversion of lactate to pyruvate. The polypeptide is L-lactate dehydrogenase 1 (Lactococcus lactis subsp. cremoris (Streptococcus cremoris)).